A 131-amino-acid polypeptide reads, in one-letter code: Fumarate reductase subunit C (131 aa).

3 consecutive transmembrane segments (helical) span residues 30–50 (EGTCLPQLWFSLVVLFGVFAL), 58–78 (AGFVGFLSNPILMLINIVTLI), and 109–129 (IVRGLWGLTIVVTVVILAVAL).

The protein belongs to the FrdC family. In terms of assembly, part of an enzyme complex containing four subunits: a flavoprotein (FrdA), an iron-sulfur protein (FrdB), and two hydrophobic anchor proteins (FrdC and FrdD).

The protein localises to the cell inner membrane. Functionally, two distinct, membrane-bound, FAD-containing enzymes are responsible for the catalysis of fumarate and succinate interconversion; fumarate reductase is used in anaerobic growth, and succinate dehydrogenase is used in aerobic growth. Anchors the catalytic components of the fumarate reductase complex to the cell inner membrane, binds quinones. This Proteus vulgaris protein is Fumarate reductase subunit C.